A 338-amino-acid chain; its full sequence is Probable tRNA pseudouridine synthase B (338 aa).

D78 serves as the catalytic Nucleophile. The PUA domain occupies 245–320 (LPKIILRDSA…IAASPIRVLM (76 aa)).

The protein belongs to the pseudouridine synthase TruB family. Type 2 subfamily.

The catalysed reaction is uridine(55) in tRNA = pseudouridine(55) in tRNA. Could be responsible for synthesis of pseudouridine from uracil-55 in the psi GC loop of transfer RNAs. The chain is Probable tRNA pseudouridine synthase B from Methanosarcina acetivorans (strain ATCC 35395 / DSM 2834 / JCM 12185 / C2A).